A 204-amino-acid chain; its full sequence is Phosphoribosyl-dephospho-CoA transferase (204 aa).

Catalysis depends on residues Asp129 and Asp131.

It belongs to the MdcG family.

It catalyses the reaction apo-[malonate decarboxylase ACP] + 2'-(5''-triphospho-alpha-D-ribosyl)-3'-dephospho-CoA = holo-[malonate decarboxylase ACP] + diphosphate. Its function is as follows. Transfers 2'-(5-triphosphoribosyl)-3'-dephosphocoenzyme-A to the apo-[acyl-carrier-protein] of the malonate decarboxylase to yield holo-[acyl-carrier-protein]. This Pseudomonas putida (strain W619) protein is Phosphoribosyl-dephospho-CoA transferase.